Here is a 131-residue protein sequence, read N- to C-terminus: Leptin receptor gene-related protein (131 aa).

The next 4 helical transmembrane spans lie at 7 to 27 (LVAL…GCAL), 32 to 52 (VYWP…HFIA), 69 to 89 (LAYF…VILA), and 100 to 120 (GLVL…FLVF).

Belongs to the OB-RGRP/VPS55 family. In terms of assembly, interacts with LEPR. Interacts with RAB13.

The protein localises to the golgi apparatus membrane. Its subcellular location is the endosome membrane. Negatively regulates leptin receptor (LEPR) cell surface expression, and thus decreases response to leptin/LEP. Negatively regulates growth hormone (GH) receptor cell surface expression in liver. May play a role in liver resistance to GH during periods of reduced nutrient availability. The polypeptide is Leptin receptor gene-related protein (LEPROT) (Sus scrofa (Pig)).